We begin with the raw amino-acid sequence, 476 residues long: Lactate utilization protein B 1 (476 aa).

4Fe-4S ferredoxin-type domains lie at 301 to 331 (GTEF…GHAY) and 350 to 379 (YDEY…LHDL). Residues C310, C313, C316, C320, C363, C366, and C370 each coordinate [4Fe-4S] cluster.

The protein belongs to the LutB/YkgF family.

Its function is as follows. Is involved in L-lactate degradation and allows cells to grow with lactate as the sole carbon source. Has probably a role as an electron transporter during oxidation of L-lactate. The protein is Lactate utilization protein B 1 of Bacillus mycoides (strain KBAB4) (Bacillus weihenstephanensis).